We begin with the raw amino-acid sequence, 276 residues long: MSLVLAVYGKGGIGKSTTSANISAALALKGAKVLQIGCDPKHDSTFPITGKLQKTVIEALEEVDFHHEELTAEDVIETGFAGIDGLEAGGPPAGSGCGGYVVGESVTLLQELGLYDKYDVILFDVLGDVVCGGFSAPLNYADYAIIIATNDFDSIFAANRLCMAIQQKSVRYKVKLAGIVANRVDYAKGGGTNMLDQFAEKVGTRLLAKVPYHELIRRSRFAGKTLFAMDDSEEGKEECLQPYLQIAEDLLSEAPMSSVPVPIGDREIFEIVGGWQ.

ATP is bound by residues Gly-12–Thr-17 and Lys-41. Position 16 (Ser-16) interacts with Mg(2+). [4Fe-4S] cluster is bound by residues Cys-97 and Cys-131. ATP is bound at residue Asn-182–Arg-183.

It belongs to the NifH/BchL/ChlL family. As to quaternary structure, homodimer. Protochlorophyllide reductase is composed of three subunits; BchL, BchN and BchB. It depends on [4Fe-4S] cluster as a cofactor.

It catalyses the reaction chlorophyllide a + oxidized 2[4Fe-4S]-[ferredoxin] + 2 ADP + 2 phosphate = protochlorophyllide a + reduced 2[4Fe-4S]-[ferredoxin] + 2 ATP + 2 H2O. The protein operates within porphyrin-containing compound metabolism; bacteriochlorophyll biosynthesis (light-independent). Its function is as follows. Component of the dark-operative protochlorophyllide reductase (DPOR) that uses Mg-ATP and reduced ferredoxin to reduce ring D of protochlorophyllide (Pchlide) to form chlorophyllide a (Chlide). This reaction is light-independent. The L component serves as a unique electron donor to the NB-component of the complex, and binds Mg-ATP. The sequence is that of Light-independent protochlorophyllide reductase iron-sulfur ATP-binding protein from Chlorobium luteolum (strain DSM 273 / BCRC 81028 / 2530) (Pelodictyon luteolum).